We begin with the raw amino-acid sequence, 174 residues long: Sarcoplasmic calcium-binding protein (174 aa).

Residue serine 1 is modified to N-acetylserine. EF-hand domains follow at residues 3–38 (LWVQKMKTYFNRIDFDKDGAITRKDFESMATRFAKE), 55–90 (GVWDKFLANVAGGKGIDQATFISSMKEKVKDPNAKA), 91–126 (VVEGPLPLFFRAVDTNEDNMISRDEYGIFFNMLGLN), and 125–160 (LNPDMAPASFDAIDTNNDGLLSQEEFVTAGSDFFIN). Positions 16, 18, 20, and 27 each coordinate Ca(2+). Ca(2+) contacts are provided by aspartate 104, asparagine 106, aspartate 108, methionine 110, glutamate 115, aspartate 138, asparagine 140, aspartate 142, and glutamate 149.

Like parvalbumins, SCPs seem to be more abundant in fast contracting muscles, but no functional relationship can be established from this distribution. The sequence is that of Sarcoplasmic calcium-binding protein from Perinereis vancaurica tetradentata (Sandworm).